We begin with the raw amino-acid sequence, 131 residues long: Small ribosomal subunit protein uS8 (131 aa).

This sequence belongs to the universal ribosomal protein uS8 family. As to quaternary structure, part of the 30S ribosomal subunit. Contacts proteins S5 and S12.

Functionally, one of the primary rRNA binding proteins, it binds directly to 16S rRNA central domain where it helps coordinate assembly of the platform of the 30S subunit. This chain is Small ribosomal subunit protein uS8, found in Thermodesulfovibrio yellowstonii (strain ATCC 51303 / DSM 11347 / YP87).